The following is a 434-amino-acid chain: 3-phosphoshikimate 1-carboxyvinyltransferase (434 aa).

K22, S23, and R27 together coordinate 3-phosphoshikimate. Position 22 (K22) interacts with phosphoenolpyruvate. 2 residues coordinate phosphoenolpyruvate: G93 and R121. Positions 168, 169, 170, 199, 320, and 347 each coordinate 3-phosphoshikimate. Phosphoenolpyruvate is bound at residue Q170. The active-site Proton acceptor is D320. Phosphoenolpyruvate contacts are provided by R351, R394, and K419.

The protein belongs to the EPSP synthase family. In terms of assembly, monomer.

The protein resides in the cytoplasm. The enzyme catalyses 3-phosphoshikimate + phosphoenolpyruvate = 5-O-(1-carboxyvinyl)-3-phosphoshikimate + phosphate. It functions in the pathway metabolic intermediate biosynthesis; chorismate biosynthesis; chorismate from D-erythrose 4-phosphate and phosphoenolpyruvate: step 6/7. Its function is as follows. Catalyzes the transfer of the enolpyruvyl moiety of phosphoenolpyruvate (PEP) to the 5-hydroxyl of shikimate-3-phosphate (S3P) to produce enolpyruvyl shikimate-3-phosphate and inorganic phosphate. This Burkholderia ambifaria (strain ATCC BAA-244 / DSM 16087 / CCUG 44356 / LMG 19182 / AMMD) (Burkholderia cepacia (strain AMMD)) protein is 3-phosphoshikimate 1-carboxyvinyltransferase.